The sequence spans 402 residues: Acetylornithine aminotransferase (402 aa).

Residues 106–107 (GA) and F132 each bind pyridoxal 5'-phosphate. R135 is a binding site for N(2)-acetyl-L-ornithine. 217 to 220 (DEVQ) serves as a coordination point for pyridoxal 5'-phosphate. Position 247 is an N6-(pyridoxal phosphate)lysine (K247). T275 contacts N(2)-acetyl-L-ornithine. T276 serves as a coordination point for pyridoxal 5'-phosphate.

The protein belongs to the class-III pyridoxal-phosphate-dependent aminotransferase family. ArgD subfamily. As to quaternary structure, homodimer. It depends on pyridoxal 5'-phosphate as a cofactor.

It is found in the cytoplasm. The enzyme catalyses N(2)-acetyl-L-ornithine + 2-oxoglutarate = N-acetyl-L-glutamate 5-semialdehyde + L-glutamate. It functions in the pathway amino-acid biosynthesis; L-arginine biosynthesis; N(2)-acetyl-L-ornithine from L-glutamate: step 4/4. In Streptomyces coelicolor (strain ATCC BAA-471 / A3(2) / M145), this protein is Acetylornithine aminotransferase.